We begin with the raw amino-acid sequence, 1070 residues long: MFIILKRNILINMSFLLNLGELGTFFADEIENLENFTNWISSDFINFINAIVNDIKNIASFLGQAISDIPTFMVNIATNFLTILQNFVQTAISTIQGFVSWFEQQIVGAFEFLSSIASDFINSAYSFFQNVANVFAQIISGVISDFLNFFGANMKHISNAISQLSQFLSPFIAPITIGKFLPVIVDKLAEILPEIEIDLAPVGLGGKIPIKFGEIIKAFAETSVDFLNEIRTELATTLKEFIKEPFISDFKISAREIFNEIGLGDLPFADPPFQLIGRWVAVRSFDEVKDHLRETILLTGYPAWFTNAYLESPVNDFVPKNPLFRPVGIRDLITGSQYGILNISDLEKYAYNNLITPKTAKLMYQNQTARLLQRAVEQGIRQFVITPQKAYEEIISNINLTGKELFLKTFTLEYEYAVQRIVRQFLRSLLSRALSNFGKPYLDFKYLDNTIAKLFKDLGYPEEVRTVFDTMITQSQLIDTNQLLLRQLQQIVKLGIFNEKKIKEELKANKFNEQVALQILESELQFAQLQNTLKEYQFKLKSFLISPKDVEKDLKHLGFDSAIISALIYENQVEQLIKFQLTNIESLAKKGYLSLDEIKKQFKAIGIIKEYEDAFINFINQELQISAFLTILKSQLRQFQIDPKVAEAELKKLNINEYLSNQIIQEEYNINIAKLHLSVLETIAKTLYYDQQQLSGELEKIIKDKTALELYIKKFYYEYIYPKIVNYHVQLARHGILSDISKLPKEVIDYEIKPALLTYQTTLEIEYIKESLKDLEIKPTDAINELEKLGMQKDIAQLIVNTYIPTFYNVHTIIQNIIEGQLYKVGKVPINLGNAESELRKLGIPDSQIKILLDQYSTTFGLDIWRKHLPSISIIENAIKYNYLDQKLIEYSFIPSELLNLYINYYQHLLVGQEVQSFKSEYITALIYNYQNLQLENLLKQYGINEALLSVIKLFAQVRKIVLGLQELYLTPTKALSISEYVSNPQQLLQKVFTEFQIPQELQNTYFEYARNRRVSRYVNEIITTINLLFEKHKIDLGTAQSYLQQLKKYGLTDEEIQLIILNWQLRSAY.

One can recognise a UBA domain in the interval 477–523 (LIDTNQLLLRQLQQIVKLGIFNEKKIKEELKANKFNEQVALQILESE).

This is an uncharacterized protein from Sulfolobus islandicus rod-shaped virus 1 (SIRV-1).